We begin with the raw amino-acid sequence, 200 residues long: Cysteine dioxygenase type 1 (200 aa).

Fe cation is bound by residues histidine 86, histidine 88, and histidine 140. The segment at residues 93–157 (CFLKLLQGNL…TEPAVSLHLY (65 aa)) is a cross-link (3'-(S-cysteinyl)-tyrosine (Cys-Tyr)).

This sequence belongs to the cysteine dioxygenase family. In terms of assembly, monomer. The cofactor is Fe(2+). Requires Ni(2+) as cofactor. Zn(2+) serves as cofactor. The thioether cross-link between Cys-93 and Tyr-157 plays a structural role through stabilizing the Fe(2+) ion, and prevents the production of highly damaging free hydroxyl radicals by holding the oxygen radical via hydroxyl hydrogen. In terms of tissue distribution, highest expression in liver. Also expressed in kidney, lung, brain and small intestine.

The catalysed reaction is L-cysteine + O2 = 3-sulfino-L-alanine + H(+). It functions in the pathway organosulfur biosynthesis; taurine biosynthesis; hypotaurine from L-cysteine: step 1/2. In terms of biological role, catalyzes the oxidation of cysteine to cysteine sulfinic acid with addition of molecular dioxygen. This Mus musculus (Mouse) protein is Cysteine dioxygenase type 1 (Cdo1).